Here is a 191-residue protein sequence, read N- to C-terminus: Cytochrome b-245 light chain (191 aa).

Over 2–7 (GQIEWA) the chain is Cytoplasmic. Residues 8–30 (MWANEQALASGLILITGGIVATA) traverse the membrane as a helical segment. At 31–35 (GQFTQ) the chain is on the extracellular side. A helical transmembrane segment spans residues 36–53 (WYLGAYSIAAGVLVCLLE). Residues 54–69 (YPRGKRSKGSTMERCG) lie on the Cytoplasmic side of the membrane. An intramembrane segment occupies 70–80 (QKYLTRVVKLF). Residues 81 to 86 (GPLTRN) are Cytoplasmic-facing. Residues 87 to 104 (YYIRAFLHLGLAVPAGFL) form a helical membrane-spanning segment. A topological domain (extracellular) is located at residue Leu-105. A helical transmembrane segment spans residues 106-126 (ATILGTACLAIASGIYLLAAI). Over 127 to 191 (RGEQWSPIEP…NPMPVNDEVV (65 aa)) the chain is Cytoplasmic. The segment at 134–191 (IEPKPKERPQIGGTIKQPPSNPPPRPPAEARKKPSEEAAGVPTGGPQENPMPVNDEVV) is disordered. Phosphothreonine is present on Thr-147. Residue Lys-149 forms a Glycyl lysine isopeptide (Lys-Gly) (interchain with G-Cter in ubiquitin) linkage. At Ser-168 the chain carries Phosphoserine.

It belongs to the p22phox family. In terms of assembly, component of the phagocyte NADPH oxidase core complex/cytochrome b558 complex, composed of CYBB (heavy chain (beta)) and CYBA (light chain (alpha)). Component of the phagocyte NADPH oxidase complex composed of an obligatory core heterodimer formed by the membrane proteins CYBA and CYBB and the cytosolic regulatory subunits NCF1/p47-phox, NCF2/p67-phox, NCF4/p40-phox and the small GTPase RAC1 or RAC2. Interacts with NCF1 (via SH3 domain). Interacts with SH3PXD2A. Interacts with DUOX1, DUOX2 and TPO. Interacts with NOX4; this interaction mediates superoxide generation. Interacts with calprotectin (S100A8/9). Interacts with GBP7. Interacts with NOXO1. Forms a heterodimer with NOX3 and is essential for activity and cell membrane localization of NOX3. Interacts with NOX1. Phosphorylation at Thr-147 enhances NADPH oxidase activity by promoting NCF1/p47-phox binding. In terms of processing, ubiquitinated at Lys-149 likely by RNF145.

It is found in the cell membrane. Its function is as follows. Subunit of NADPH oxidase complexes that is required for the NADPH oxidase activity that generates, in various cell types, superoxide from molecular oxygen utilizing NADPH as an electron donor. Subunit of the phagocyte NADPH oxidase complex that mediates the transfer of electrons from cytosolic NADPH to O2 to produce the superoxide anion (O2(-)). In the activated complex, electrons are first transferred from NADPH to flavin adenine dinucleotide (FAD) and subsequently transferred via two heme molecules to molecular oxygen, producing superoxide through an outer-sphere reaction. Activation of the NADPH oxidase complex is initiated by the assembly of cytosolic subunits of the NADPH oxidase complex with the core NADPH oxidase complex to form a complex at the plasma membrane or phagosomal membrane. This activation process is initiated by phosphorylation dependent binding of the cytosolic NCF1/p47-phox subunit to the C-terminus of CYBA/p22-phox. Aassociates with NOX3 to form a functional NADPH oxidase constitutively generating superoxide. This is Cytochrome b-245 light chain from Bos taurus (Bovine).